The primary structure comprises 192 residues: Na(+)-translocating ferredoxin:NAD(+) oxidoreductase complex subunit A (192 aa).

6 consecutive transmembrane segments (helical) span residues 4 to 24 (IFIMISAIFVNNFVLSRFLGI), 38 to 58 (VGMGVAVTFVMALASAITYVV), 71 to 91 (LQTIAFILIIAALVQLVEMII), 101 to 121 (ALGVYLPLITTNCAVLGVALI), 133 to 153 (IFNGVGAALGFTLAIVLFAGI), and 169 to 189 (FPIALLTAGLMAIAFLGFSGM).

Belongs to the NqrDE/RnfAE family. The complex is composed of six subunits: RnfA, RnfB, RnfC, RnfD, RnfE and RnfG.

The protein localises to the cell membrane. It catalyses the reaction 2 reduced [2Fe-2S]-[ferredoxin] + Na(+)(in) + NAD(+) + H(+) = 2 oxidized [2Fe-2S]-[ferredoxin] + Na(+)(out) + NADH. Part of a membrane-bound complex that couples electron transfer with translocation of ions across the membrane. Couples electron transfer from reduced ferredoxin to NAD(+) with electrogenic movement of Na(+) out of the cell. Involved in caffeate respiration. This chain is Na(+)-translocating ferredoxin:NAD(+) oxidoreductase complex subunit A, found in Acetobacterium woodii (strain ATCC 29683 / DSM 1030 / JCM 2381 / KCTC 1655 / WB1).